The sequence spans 135 residues: MRASAVPEILAARLAQSDPPVSEYAVELVEGVVERRGEIDERIARYAEGWTLERMPPVDRNILRIAVLELLWRPDVPDRVAIDEAVELAKNLSTHRSPAFVNGLLASLVEGKGLATPAESTGRGSAVDSIPGQPS.

The disordered stretch occupies residues 115 to 135 (ATPAESTGRGSAVDSIPGQPS).

Belongs to the NusB family.

Involved in transcription antitermination. Required for transcription of ribosomal RNA (rRNA) genes. Binds specifically to the boxA antiterminator sequence of the ribosomal RNA (rrn) operons. This Frankia casuarinae (strain DSM 45818 / CECT 9043 / HFP020203 / CcI3) protein is Transcription antitermination protein NusB.